A 244-amino-acid chain; its full sequence is Phosphoadenosine 5'-phosphosulfate reductase (244 aa).

Residue C239 is the Nucleophile; cysteine thiosulfonate intermediate of the active site.

This sequence belongs to the PAPS reductase family. CysH subfamily.

The protein resides in the cytoplasm. It carries out the reaction [thioredoxin]-disulfide + sulfite + adenosine 3',5'-bisphosphate + 2 H(+) = [thioredoxin]-dithiol + 3'-phosphoadenylyl sulfate. The protein operates within sulfur metabolism; hydrogen sulfide biosynthesis; sulfite from sulfate: step 3/3. In terms of biological role, catalyzes the formation of sulfite from phosphoadenosine 5'-phosphosulfate (PAPS) using thioredoxin as an electron donor. In Pectobacterium carotovorum subsp. carotovorum (strain PC1), this protein is Phosphoadenosine 5'-phosphosulfate reductase.